Consider the following 121-residue polypeptide: Large ribosomal subunit protein bL12 (121 aa).

It belongs to the bacterial ribosomal protein bL12 family. As to quaternary structure, homodimer. Part of the ribosomal stalk of the 50S ribosomal subunit. Forms a multimeric L10(L12)X complex, where L10 forms an elongated spine to which 2 to 4 L12 dimers bind in a sequential fashion. Binds GTP-bound translation factors.

Its function is as follows. Forms part of the ribosomal stalk which helps the ribosome interact with GTP-bound translation factors. Is thus essential for accurate translation. The protein is Large ribosomal subunit protein bL12 of Baumannia cicadellinicola subsp. Homalodisca coagulata.